The chain runs to 640 residues: Antigenic protein NP1 (640 aa).

Residues valine 1–glycine 288 form the Peptidase M60 domain. The region spanning leucine 463–lysine 615 is the PA14 domain.

In Entamoeba histolytica, this protein is Antigenic protein NP1.